The sequence spans 379 residues: Flap endonuclease 1 (379 aa).

Positions 1 to 105 are N-domain; sequence MGIKGLTKLL…QELAKRYSKR (105 aa). D34 serves as a coordination point for Mg(2+). Residue R71 coordinates DNA. Mg(2+) is bound by residues D87, E159, E161, D180, and D182. Residues 123 to 254 are I-domain; sequence AIEKLSKRTV…QTALKLIRQH (132 aa). E159 serves as a coordination point for DNA. 2 residues coordinate DNA: G232 and D234. Position 234 (D234) interacts with Mg(2+). The disordered stretch occupies residues 331-379; the sequence is AKNKSSQGRLESFFKPTATTSAPLKRKETSDKTSKAAANKKTKAGGKKK. An interaction with PCNA region spans residues 336–344; it reads SQGRLESFF. The segment covering 355–364 has biased composition (basic and acidic residues); it reads KRKETSDKTS. The span at 368–379 shows a compositional bias: basic residues; the sequence is ANKKTKAGGKKK.

It belongs to the XPG/RAD2 endonuclease family. FEN1 subfamily. As to quaternary structure, interacts with PCNA. Three molecules of FEN1 bind to one PCNA trimer with each molecule binding to one PCNA monomer. PCNA stimulates the nuclease activity without altering cleavage specificity. It depends on Mg(2+) as a cofactor. In terms of processing, phosphorylated. Phosphorylation upon DNA damage induces relocalization to the nuclear plasma.

The protein resides in the nucleus. It localises to the nucleolus. The protein localises to the nucleoplasm. Its subcellular location is the mitochondrion. In terms of biological role, structure-specific nuclease with 5'-flap endonuclease and 5'-3' exonuclease activities involved in DNA replication and repair. During DNA replication, cleaves the 5'-overhanging flap structure that is generated by displacement synthesis when DNA polymerase encounters the 5'-end of a downstream Okazaki fragment. It enters the flap from the 5'-end and then tracks to cleave the flap base, leaving a nick for ligation. Also involved in the long patch base excision repair (LP-BER) pathway, by cleaving within the apurinic/apyrimidinic (AP) site-terminated flap. Acts as a genome stabilization factor that prevents flaps from equilibrating into structures that lead to duplications and deletions. Also possesses 5'-3' exonuclease activity on nicked or gapped double-stranded DNA, and exhibits RNase H activity. Also involved in replication and repair of rDNA and in repairing mitochondrial DNA. The protein is Flap endonuclease 1 of Zea mays (Maize).